Reading from the N-terminus, the 115-residue chain is uncharacterized protein (115 aa).

Transmembrane regions (helical) follow at residues Phe-11–Asn-31 and Gly-85–Ile-105.

The protein to M.thermoautotrophicum MTH1706.

It is found in the cell membrane. This is an uncharacterized protein from Methanocaldococcus jannaschii (strain ATCC 43067 / DSM 2661 / JAL-1 / JCM 10045 / NBRC 100440) (Methanococcus jannaschii).